A 366-amino-acid chain; its full sequence is MSTAYFDADCDLEPSLKSLFSLKTLKWIFVGGKGGVGKTTTSCSIASRLAEERESVLILSTDPAHNLSDAFVQKFSNAPTLVNGYKNLYAMELDASYQQAVEFKLKEENSLFSKFLPDLISALPGIDEALGFATLMQSVKSMSYSVIVFDTAPTGHTLRLLSFPSLLEKGLSKLFSIKQNMSGALQLINSVSGNAIEEETLNSKLEDLKAITTSVKETFQDPSKTTFVCVCIPEFLSVYETERLIQELAKQSISCSHIVVNQVMFPIDLPSGNDQGESVLKDSSELLKLEDIPSDHSKLVEFTEKIVCSYNKLLSYSKLLYSKYYSKRNMQMKYLEQIRDLYSYDFHVAYIPTLNNEVSKIRVLIS.

Residue 33–40 (KGGVGKTT) coordinates ATP. Residue Asp62 is part of the active site. Residues Glu234 and Asn261 each contribute to the ATP site.

Belongs to the arsA ATPase family. Homodimer.

Its subcellular location is the cytoplasm. It is found in the endoplasmic reticulum. Its function is as follows. ATPase required for the post-translational delivery of tail-anchored (TA) proteins to the endoplasmic reticulum. Recognizes and selectively binds the transmembrane domain of TA proteins in the cytosol. This complex then targets to the endoplasmic reticulum by membrane-bound receptors, where the tail-anchored protein is released for insertion. This process is regulated by ATP binding and hydrolysis. ATP binding drives the homodimer towards the closed dimer state, facilitating recognition of newly synthesized TA membrane proteins. ATP hydrolysis is required for insertion. Subsequently, the homodimer reverts towards the open dimer state, lowering its affinity for the membrane-bound receptor, and returning it to the cytosol to initiate a new round of targeting. In Cryptosporidium parvum (strain Iowa II), this protein is ATPase ASNA1 homolog.